We begin with the raw amino-acid sequence, 165 residues long: uncharacterized protein (165 aa).

This is an uncharacterized protein from Homo sapiens (Human).